Here is a 333-residue protein sequence, read N- to C-terminus: MKIGIIGAGSFGTALGSILADKGYDVTLWTRSEEQARSINENHMNSKHMPDLVLPDRLKASTDLIQVVKDKDMIVSAPPSHALSGILKEIKDHIPPKVPIVSASKGIENESLRLVSEIFESELPGQFHSQLSYLSGPSFAKEMVKRVPTIVSIASKNEATAKRVQEIFSFTYFRTYWTPDVVGVEVGGALKNVIAIAAGVADGLGFGQNTRAALITRGLNEITRMGIKMGADPMTFLGPSGMGDLVLTCCGEASRNRTVGFRLGKGESLKEILSSMNEVAEGVKTTLSTKNLADKLGVEMAITQEVYHMLYEDKDPKEVVRALMSRDLKREGV.

NADPH contacts are provided by serine 10, phenylalanine 11, arginine 31, and lysine 105. 3 residues coordinate sn-glycerol 3-phosphate: lysine 105, glycine 136, and serine 138. Residue alanine 140 coordinates NADPH. 5 residues coordinate sn-glycerol 3-phosphate: lysine 191, aspartate 244, serine 254, arginine 255, and asparagine 256. Lysine 191 functions as the Proton acceptor in the catalytic mechanism. Arginine 255 is an NADPH binding site. The NADPH site is built by valine 279 and glutamate 281.

It belongs to the NAD-dependent glycerol-3-phosphate dehydrogenase family.

The protein localises to the cytoplasm. It catalyses the reaction sn-glycerol 3-phosphate + NAD(+) = dihydroxyacetone phosphate + NADH + H(+). The enzyme catalyses sn-glycerol 3-phosphate + NADP(+) = dihydroxyacetone phosphate + NADPH + H(+). Its pathway is membrane lipid metabolism; glycerophospholipid metabolism. Functionally, catalyzes the reduction of the glycolytic intermediate dihydroxyacetone phosphate (DHAP) to sn-glycerol 3-phosphate (G3P), the key precursor for phospholipid synthesis. The protein is Glycerol-3-phosphate dehydrogenase [NAD(P)+] of Leptospira biflexa serovar Patoc (strain Patoc 1 / Ames).